The primary structure comprises 311 residues: 4-diphosphocytidyl-2-C-methyl-D-erythritol kinase (311 aa).

Lysine 16 is a catalytic residue. 100–110 (PIGAGLAGGSS) provides a ligand contact to ATP. Residue aspartate 142 is part of the active site.

The protein belongs to the GHMP kinase family. IspE subfamily.

The enzyme catalyses 4-CDP-2-C-methyl-D-erythritol + ATP = 4-CDP-2-C-methyl-D-erythritol 2-phosphate + ADP + H(+). The protein operates within isoprenoid biosynthesis; isopentenyl diphosphate biosynthesis via DXP pathway; isopentenyl diphosphate from 1-deoxy-D-xylulose 5-phosphate: step 3/6. Its function is as follows. Catalyzes the phosphorylation of the position 2 hydroxy group of 4-diphosphocytidyl-2C-methyl-D-erythritol. The polypeptide is 4-diphosphocytidyl-2-C-methyl-D-erythritol kinase (Prochlorococcus marinus (strain MIT 9301)).